The sequence spans 413 residues: Arginine biosynthesis bifunctional protein ArgJ (413 aa).

Substrate contacts are provided by Thr158, Lys184, Thr195, Glu285, Asn408, and Ser413. The active-site Nucleophile is Thr195.

Belongs to the ArgJ family. In terms of assembly, heterotetramer of two alpha and two beta chains.

It localises to the cytoplasm. The catalysed reaction is N(2)-acetyl-L-ornithine + L-glutamate = N-acetyl-L-glutamate + L-ornithine. The enzyme catalyses L-glutamate + acetyl-CoA = N-acetyl-L-glutamate + CoA + H(+). It participates in amino-acid biosynthesis; L-arginine biosynthesis; L-ornithine and N-acetyl-L-glutamate from L-glutamate and N(2)-acetyl-L-ornithine (cyclic): step 1/1. It functions in the pathway amino-acid biosynthesis; L-arginine biosynthesis; N(2)-acetyl-L-ornithine from L-glutamate: step 1/4. Catalyzes two activities which are involved in the cyclic version of arginine biosynthesis: the synthesis of N-acetylglutamate from glutamate and acetyl-CoA as the acetyl donor, and of ornithine by transacetylation between N(2)-acetylornithine and glutamate. The sequence is that of Arginine biosynthesis bifunctional protein ArgJ from Mesorhizobium japonicum (strain LMG 29417 / CECT 9101 / MAFF 303099) (Mesorhizobium loti (strain MAFF 303099)).